A 394-amino-acid chain; its full sequence is Elongation factor Tu (394 aa).

Residues 10-204 (KPHINVGTIG…ALDNYIPEPK (195 aa)) enclose the tr-type G domain. Residues 19-26 (GHVDHGKT) form a G1 region. 19–26 (GHVDHGKT) contacts GTP. T26 is a binding site for Mg(2+). The segment at 60-64 (GITIN) is G2. The tract at residues 81 to 84 (DCPG) is G3. GTP-binding positions include 81–85 (DCPGH) and 136–139 (NKCD). The segment at 136-139 (NKCD) is G4. The interval 174–176 (SAL) is G5.

This sequence belongs to the TRAFAC class translation factor GTPase superfamily. Classic translation factor GTPase family. EF-Tu/EF-1A subfamily. As to quaternary structure, monomer.

The protein localises to the cytoplasm. It carries out the reaction GTP + H2O = GDP + phosphate + H(+). In terms of biological role, GTP hydrolase that promotes the GTP-dependent binding of aminoacyl-tRNA to the A-site of ribosomes during protein biosynthesis. This is Elongation factor Tu from Blochmanniella pennsylvanica (strain BPEN).